The following is a 77-amino-acid chain: Conotoxin LiC42 (77 aa).

An N-terminal signal peptide occupies residues 1 to 22 (MKLTCVLIIAVLFLTASQLITA). Positions 23–47 (DYSRDKQEYGAERLRDAMGKFKGSR) are excised as a propeptide. 3 disulfides stabilise this stretch: cysteine 49–cysteine 62, cysteine 56–cysteine 67, and cysteine 61–cysteine 76.

Belongs to the conotoxin O1 superfamily. As to expression, expressed by the venom duct.

It localises to the secreted. In Conus lividus (Livid cone), this protein is Conotoxin LiC42.